Here is a 509-residue protein sequence, read N- to C-terminus: Light-independent protochlorophyllide reductase subunit B (509 aa).

Aspartate 36 serves as a coordination point for [4Fe-4S] cluster. Catalysis depends on aspartate 298, which acts as the Proton donor. Position 433 to 434 (433 to 434 (GM)) interacts with substrate.

The protein belongs to the ChlB/BchB/BchZ family. In terms of assembly, protochlorophyllide reductase is composed of three subunits; ChlL, ChlN and ChlB. Forms a heterotetramer of two ChlB and two ChlN subunits. [4Fe-4S] cluster serves as cofactor.

It localises to the plastid. The protein localises to the chloroplast. It catalyses the reaction chlorophyllide a + oxidized 2[4Fe-4S]-[ferredoxin] + 2 ADP + 2 phosphate = protochlorophyllide a + reduced 2[4Fe-4S]-[ferredoxin] + 2 ATP + 2 H2O. It participates in porphyrin-containing compound metabolism; chlorophyll biosynthesis (light-independent). Functionally, component of the dark-operative protochlorophyllide reductase (DPOR) that uses Mg-ATP and reduced ferredoxin to reduce ring D of protochlorophyllide (Pchlide) to form chlorophyllide a (Chlide). This reaction is light-independent. The NB-protein (ChlN-ChlB) is the catalytic component of the complex. The sequence is that of Light-independent protochlorophyllide reductase subunit B from Ephedra altissima (High-climbing jointfir).